The sequence spans 531 residues: Light-independent protochlorophyllide reductase subunit B (531 aa).

Asp36 is a [4Fe-4S] cluster binding site. Catalysis depends on Asp296, which acts as the Proton donor. 431–432 (GM) is a substrate binding site.

This sequence belongs to the ChlB/BchB/BchZ family. As to quaternary structure, protochlorophyllide reductase is composed of three subunits; ChlL, ChlN and ChlB. Forms a heterotetramer of two ChlB and two ChlN subunits. The cofactor is [4Fe-4S] cluster.

Its subcellular location is the plastid. The protein resides in the chloroplast. The catalysed reaction is chlorophyllide a + oxidized 2[4Fe-4S]-[ferredoxin] + 2 ADP + 2 phosphate = protochlorophyllide a + reduced 2[4Fe-4S]-[ferredoxin] + 2 ATP + 2 H2O. It functions in the pathway porphyrin-containing compound metabolism; chlorophyll biosynthesis (light-independent). Functionally, component of the dark-operative protochlorophyllide reductase (DPOR) that uses Mg-ATP and reduced ferredoxin to reduce ring D of protochlorophyllide (Pchlide) to form chlorophyllide a (Chlide). This reaction is light-independent. The NB-protein (ChlN-ChlB) is the catalytic component of the complex. The protein is Light-independent protochlorophyllide reductase subunit B of Nephroselmis olivacea (Green alga).